The sequence spans 326 residues: MNRHADVPVIDISGLSGNDMDVKKDIAARIDRACRGSGFFYAANHGVDLAALQKFTTDWHMAMSAEEKWELAIRAYNPANPRNRNGYYMAVEGKKANESFCYLNPSFDADHATIKAGLPSHEVNIWPDEARHPGMRRFYEAYFSDVFDVAAVILRGFAIALGREESFFERHFSMDDTLSAVSLIRYPFLENYPPLKLGPDGEKLSFEHHQDVSLITVLYQTAIPNLQVETAEGYLDIPVSDEHFLVNCGTYMAHITNGYYPAPVHRVKYINAERLSIPFFANLSHASAIDPFAPPPYAPPGGNPTVSYGDYLQHGLLDLIRANGQT.

The isopenicillin N site is built by Arg84, Tyr88, and Tyr186. Residues Arg84, Tyr88, Tyr186, His209, and Asp211 each coordinate N-[(5S)-5-amino-5-carboxypentanoyl]-L-cysteinyl-D-valine. One can recognise a Fe2OG dioxygenase domain in the interval 183–283 (LIRYPFLENY…RLSIPFFANL (101 aa)). Fe(2+)-binding residues include His209, Asp211, and His265. Residue Arg274 coordinates 2-oxoglutarate. Position 276 (Ser276) interacts with isopenicillin N. An N-[(5S)-5-amino-5-carboxypentanoyl]-L-cysteinyl-D-valine-binding site is contributed by Ser276.

This sequence belongs to the iron/ascorbate-dependent oxidoreductase family. Fe cation serves as cofactor. It depends on L-ascorbate as a cofactor.

The catalysed reaction is N-[(5S)-5-amino-5-carboxypentanoyl]-L-cysteinyl-D-valine + O2 = isopenicillin N + 2 H2O. Its pathway is antibiotic biosynthesis; penicillin G biosynthesis; penicillin G from L-alpha-aminoadipate and L-cysteine and L-valine: step 2/3. Its function is as follows. Removes, in the presence of oxygen, 4 hydrogen atoms from delta-L-(alpha-aminoadipyl)-L-cysteinyl-D-valine (ACV) to form the azetidinone and thiazolidine rings of isopenicillin. The chain is Isopenicillin N synthase (pcbC) from Flavobacterium sp. (strain SC 12,154).